A 119-amino-acid chain; its full sequence is Large ribosomal subunit protein uL22c (119 aa).

The protein belongs to the universal ribosomal protein uL22 family. Part of the 50S ribosomal subunit.

It is found in the plastid. The protein resides in the chloroplast. Its function is as follows. This protein binds specifically to 23S rRNA. In terms of biological role, the globular domain of the protein is located near the polypeptide exit tunnel on the outside of the subunit, while an extended beta-hairpin is found that lines the wall of the exit tunnel in the center of the 70S ribosome. This Angiopteris evecta (Mule's foot fern) protein is Large ribosomal subunit protein uL22c (rpl22).